The chain runs to 545 residues: Metal transporter NRAT1 (545 aa).

The next 12 membrane-spanning stretches (helical) occupy residues 51-71, 84-104, 128-148, 155-175, 188-208, 234-254, 278-298, 333-353, 373-395, 398-418, 437-457, and 474-494; these read FLAH…PSNL, ELLW…TLAA, IFLW…EVLG, ILLK…TLLL, FIIA…LSYL, IALF…ALVL, LAFI…GSIC, VVYA…CTFA, LITR…PSGA, LIIL…IPLL, VVIA…FLVW, and GLIS…VVYL. Residues 516–545 form a disordered region; sequence EAGGTPVVDASAADEDQPAPYRKDLADASM. A compositionally biased stretch (basic and acidic residues) spans 536-545; the sequence is YRKDLADASM.

It belongs to the NRAMP (TC 2.A.55) family. Expressed at low levels in roots.

It localises to the cell membrane. In terms of biological role, metal transporter that transports the trivalent cation aluminum (Al(3+)), but does not seem to transport divalent cations such as iron (Fe(2+)), manganese (Mg(2+)) or Cadmium (Cd(2+)). Involved in Al tolerance by taking up Al in root cells, where it is detoxified by chelation with organic acid anions and sequestration into the vacuoles. This is Metal transporter NRAT1 (NRAT1) from Oryza sativa subsp. japonica (Rice).